Here is a 156-residue protein sequence, read N- to C-terminus: 6,7-dimethyl-8-ribityllumazine synthase (156 aa).

5-amino-6-(D-ribitylamino)uracil is bound by residues Phe22, 57–59, and 81–83; these read AYE and TVI. 86–87 contributes to the (2S)-2-hydroxy-3-oxobutyl phosphate binding site; the sequence is GT. Residue His89 is the Proton donor of the active site. Residue Phe114 coordinates 5-amino-6-(D-ribitylamino)uracil. Position 128 (Arg128) interacts with (2S)-2-hydroxy-3-oxobutyl phosphate.

It belongs to the DMRL synthase family. In terms of assembly, forms an icosahedral capsid composed of 60 subunits, arranged as a dodecamer of pentamers.

It carries out the reaction (2S)-2-hydroxy-3-oxobutyl phosphate + 5-amino-6-(D-ribitylamino)uracil = 6,7-dimethyl-8-(1-D-ribityl)lumazine + phosphate + 2 H2O + H(+). The protein operates within cofactor biosynthesis; riboflavin biosynthesis; riboflavin from 2-hydroxy-3-oxobutyl phosphate and 5-amino-6-(D-ribitylamino)uracil: step 1/2. Catalyzes the formation of 6,7-dimethyl-8-ribityllumazine by condensation of 5-amino-6-(D-ribitylamino)uracil with 3,4-dihydroxy-2-butanone 4-phosphate. This is the penultimate step in the biosynthesis of riboflavin. In Erwinia tasmaniensis (strain DSM 17950 / CFBP 7177 / CIP 109463 / NCPPB 4357 / Et1/99), this protein is 6,7-dimethyl-8-ribityllumazine synthase.